The primary structure comprises 572 residues: Adenine deaminase (572 aa).

This sequence belongs to the metallo-dependent hydrolases superfamily. Adenine deaminase family. It depends on Mn(2+) as a cofactor.

It carries out the reaction adenine + H2O + H(+) = hypoxanthine + NH4(+). This chain is Adenine deaminase, found in Clostridium perfringens (strain 13 / Type A).